A 196-amino-acid chain; its full sequence is RNA pyrophosphohydrolase (196 aa).

The 144-residue stretch at 6-149 (GYRPNVGIVI…KRDVYRKVMK (144 aa)) folds into the Nudix hydrolase domain. The short motif at 38 to 59 (GGINDNESAEQAMYRELHEEVG) is the Nudix box element.

This sequence belongs to the Nudix hydrolase family. RppH subfamily. A divalent metal cation serves as cofactor.

In terms of biological role, accelerates the degradation of transcripts by removing pyrophosphate from the 5'-end of triphosphorylated RNA, leading to a more labile monophosphorylated state that can stimulate subsequent ribonuclease cleavage. This chain is RNA pyrophosphohydrolase, found in Haemophilus influenzae (strain ATCC 51907 / DSM 11121 / KW20 / Rd).